The primary structure comprises 420 residues: Alpha-ketoglutarate-dependent xanthine dioxygenase xan-1 (420 aa).

Fe cation is bound by residues His157 and Asp159. 2-oxoglutarate is bound by residues Thr206 and Trp336. His351 provides a ligand contact to Fe cation. Arg366 is a binding site for 2-oxoglutarate. Substrate is bound at residue Arg366.

The protein belongs to the TfdA dioxygenase family. Fe(2+) is required as a cofactor.

It is found in the cytoplasm. Its subcellular location is the cytosol. The enzyme catalyses xanthine + 2-oxoglutarate + O2 = urate + succinate + CO2. In terms of biological role, alpha-ketoglutarate-dependent xanthine dioxygenase is a non-heme mononuclear Fe(2+) enzyme that decarboxylates alpha-ketoglutarate to succinate and CO(2) while hydroxylating xanthine to generate uric acid. Allows xanthine utilization as a nitrogen source. The protein is Alpha-ketoglutarate-dependent xanthine dioxygenase xan-1 of Neurospora crassa (strain ATCC 24698 / 74-OR23-1A / CBS 708.71 / DSM 1257 / FGSC 987).